We begin with the raw amino-acid sequence, 395 residues long: uncharacterized protein (395 aa).

The next 8 membrane-spanning stretches (helical) occupy residues 15-35, 56-76, 86-106, 131-151, 175-195, 254-274, 298-318, and 348-368; these read ILAFSFFIAFLVVVSVLVTVF, WPWILLIVLGIVVTLAWNIII, FHAPWWEWVLFACVVQFFQIV, AVLLVTSTGAFWNLAQALITW, WFSFAGMIFDVVVAILFIFIA, LANILIAVVGYFSVFAVFAIV, IAITASNFIPVPSGEGATQFV, and VYIPAILFSLCFIGWVVQVVI.

It localises to the cell membrane. This is an uncharacterized protein from Mycoplasma pneumoniae (strain ATCC 29342 / M129 / Subtype 1) (Mycoplasmoides pneumoniae).